The following is a 310-amino-acid chain: ADP-L-glycero-D-manno-heptose-6-epimerase (310 aa).

NADP(+)-binding positions include F10 to I11, D31 to N32, K38, K53, E75 to S79, and N92. Residue Y140 is the Proton acceptor of the active site. Residue K144 coordinates NADP(+). N169 lines the substrate pocket. NADP(+)-binding residues include V170 and K178. K178 (proton acceptor) is an active-site residue. Substrate is bound by residues G180, H187, F201–S204, R209, and Y272.

The protein belongs to the NAD(P)-dependent epimerase/dehydratase family. HldD subfamily. Homopentamer. NADP(+) serves as cofactor.

It carries out the reaction ADP-D-glycero-beta-D-manno-heptose = ADP-L-glycero-beta-D-manno-heptose. The protein operates within nucleotide-sugar biosynthesis; ADP-L-glycero-beta-D-manno-heptose biosynthesis; ADP-L-glycero-beta-D-manno-heptose from D-glycero-beta-D-manno-heptose 7-phosphate: step 4/4. In terms of biological role, catalyzes the interconversion between ADP-D-glycero-beta-D-manno-heptose and ADP-L-glycero-beta-D-manno-heptose via an epimerization at carbon 6 of the heptose. The protein is ADP-L-glycero-D-manno-heptose-6-epimerase of Sodalis glossinidius (strain morsitans).